A 169-amino-acid chain; its full sequence is Ribosomal RNA large subunit methyltransferase H (169 aa).

S-adenosyl-L-methionine is bound by residues L85, G117, and 136 to 141 (LGELTW).

Belongs to the RNA methyltransferase RlmH family. As to quaternary structure, homodimer.

The protein resides in the cytoplasm. The catalysed reaction is pseudouridine(1915) in 23S rRNA + S-adenosyl-L-methionine = N(3)-methylpseudouridine(1915) in 23S rRNA + S-adenosyl-L-homocysteine + H(+). Specifically methylates the pseudouridine at position 1915 (m3Psi1915) in 23S rRNA. In Brucella abortus biovar 1 (strain 9-941), this protein is Ribosomal RNA large subunit methyltransferase H.